Reading from the N-terminus, the 994-residue chain is MPPTLLLLLLLLPPSLASPDRDIYALAKLKAALVPSPSATAPPPLADWDPAATSPAHCTFSGVTCDGRSRVVAINLTALPLHSGYLPPEIALLDSLANLTIAACCLPGHVPLELPTLPSLRHLNLSNNNLSGHFPVPDSGGGASPYFPSLELIDAYNNNLSGLLPPFSASHARLRYLHLGGNYFTGAIPDSYGDLAALEYLGLNGNTLSGHVPVSLSRLTRLREMYIGYYNQYDGGVPPEFGDLGALLRLDMSSCNLTGPVPPELGRLQRLDTLFLQWNRLSGEIPPQLGDLSSLASLDLSVNDLAGEIPPSLANLSNLKLLNLFRNHLRGSIPDFVAGFAQLEVLQLWDNNLTGNIPAGLGKNGRLKTLDLATNHLTGPIPADLCAGRRLEMLVLMENGLFGPIPDSLGDCKTLTRVRLAKNFLTGPVPAGLFNLPQANMVELTDNLLTGELPDVIGGDKIGMLLLGNNGIGGRIPPAIGNLPALQTLSLESNNFSGALPPEIGNLKNLSRLNVSGNALTGAIPDELIRCASLAAVDLSRNGFSGEIPESITSLKILCTLNVSRNRLTGELPPEMSNMTSLTTLDVSYNSLSGPVPMQGQFLVFNESSFVGNPGLCGGPVADACPPSMAGGGGGAGSQLRLRWDSKKMLVALVAAFAAVAVAFLGARKGCSAWRSAARRRSGAWKMTAFQKLEFSAEDVVECVKEDNIIGKGGAGIVYHGVTRGAELAIKRLVGRGGGEHDRGFSAEVTTLGRIRHRNIVRLLGFVSNRETNLLLYEYMPNGSLGEMLHGGKGGHLGWEARARVAAEAACGLCYLHHDCAPRIIHRDVKSNNILLDSAFEAHVADFGLAKFLGGATSECMSAIAGSYGYIAPEYAYTLRVDEKSDVYSFGVVLLELITGRRPVGGFGDGVDIVHWVRKVTAELPDNSDTAAVLAVADRRLTPEPVALMVNLYKVAMACVEEASTARPTMREVVHMLSNPNSAQPNSGDLLVTF.

Residues 1–17 (MPPTLLLLLLLLPPSLA) form the signal peptide. LRR repeat units follow at residues 73–93 (AINLTALPLHSGYLPPEIALL), 94–117 (DSLANLTIAACCLPGHVPLELPTL), 118–141 (PSLRHLNLSNNNLSGHFPVPDSGG), 147–171 (FPSLELIDAYNNNLSGLLPPFSASH), 172–194 (ARLRYLHLGGNYFTGAIPDSYGD), 195–219 (LAALEYLGLNGNTLSGHVPVSLSRL), 244–268 (LGALLRLDMSSCNLTGPVPPELGRL), 269–292 (QRLDTLFLQWNRLSGEIPPQLGDL), 293–316 (SSLASLDLSVNDLAGEIPPSLANL), 318–340 (NLKLLNLFRNHLRGSIPDFVAGF), 341–364 (AQLEVLQLWDNNLTGNIPAGLGKN), 365–388 (GRLKTLDLATNHLTGPIPADLCAG), 390–412 (RLEMLVLMENGLFGPIPDSLGDC), 413–436 (KTLTRVRLAKNFLTGPVPAGLFNL), 438–459 (QANMVELTDNLLTGELPDVIGG), 460–483 (DKIGMLLLGNNGIGGRIPPAIGNL), 484–507 (PALQTLSLESNNFSGALPPEIGNL), 509–531 (NLSRLNVSGNALTGAIPDELIRC), 533–555 (SLAAVDLSRNGFSGEIPESITSL), 556–579 (KILCTLNVSRNRLTGELPPEMSNM), and 581–604 (SLTTLDVSYNSLSGPVPMQGQFLV). Asparagine 75, asparagine 98, asparagine 124, asparagine 129, and asparagine 159 each carry an N-linked (GlcNAc...) asparagine glycan. Asparagine 256 carries an N-linked (GlcNAc...) asparagine glycan. Asparagine 315 is a glycosylation site (N-linked (GlcNAc...) asparagine). Asparagine 352 is a glycosylation site (N-linked (GlcNAc...) asparagine). N-linked (GlcNAc...) asparagine glycans are attached at residues asparagine 495, asparagine 509, and asparagine 514. N-linked (GlcNAc...) asparagine glycosylation is found at asparagine 562 and asparagine 578. Asparagine 606 carries an N-linked (GlcNAc...) asparagine glycan. Residues 647–667 (KKMLVALVAAFAAVAVAFLGA) form a helical membrane-spanning segment. Positions 704–978 (VKEDNIIGKG…TMREVVHMLS (275 aa)) constitute a Protein kinase domain. ATP-binding positions include 710-718 (IGKGGAGIV) and lysine 731. The active-site Proton acceptor is the aspartate 828.

Belongs to the protein kinase superfamily. Ser/Thr protein kinase family. Expressed in shoot apical meristem, and after transition to the reproductive phase, detected in the inflorescence and the floral meristems. Expressed uniformly throughout the meristems. Expressed also in floral organ primordia, such as the palea, lemma, lodicules, stamens, carpels and ovules.

It localises to the membrane. It catalyses the reaction L-seryl-[protein] + ATP = O-phospho-L-seryl-[protein] + ADP + H(+). It carries out the reaction L-threonyl-[protein] + ATP = O-phospho-L-threonyl-[protein] + ADP + H(+). Functionally, receptor-like kinase protein that regulates the size of the floral meristem. In Oryza sativa subsp. japonica (Rice), this protein is Leucine-rich repeat receptor-like kinase protein FLORAL ORGAN NUMBER1 (FON1).